The primary structure comprises 317 residues: Long form salivary protein D7L2 (317 aa).

The N-terminal stretch at 1 to 20 (MYKLLVALHLILCTVSHVKT) is a signal peptide. Intrachain disulfides connect C39–C76, C72–C131, C181–C214, C195–C316, and C255–C266. Positions 58 and 73 each coordinate thromboxane A2. Positions 182, 264, 281, 284, and 308 each coordinate serotonin.

This sequence belongs to the PBP/GOBP family. In terms of tissue distribution, female salivary gland.

The protein localises to the secreted. Its function is as follows. Modulates blood feeding of female mosquitoes on vertebrate species by binding and sequestering different mediators involved in the host response, such as biogenic amines and eicosanoids. Binds serotonin with high affinity. Binds tryptamine, octopamine, dopamine and noradrenaline with low affinity. Binds leukotriene C4, leukotriene D4, leukotriene E4 and U-46619, a stable analog of thromboxane A2. Does not bind leukotriene B4, adrenaline, histamine and ADP. Inhibits platelet aggregation induced by low concentrations of collagen and arachidonic acid but not by ADP or adrenaline. The sequence is that of Long form salivary protein D7L2 from Anopheles darlingi (Mosquito).